A 373-amino-acid chain; its full sequence is Mannitol-1-phosphate 5-dehydrogenase (373 aa).

3 to 14 (ALHFGAGNIGRG) serves as a coordination point for NAD(+).

This sequence belongs to the mannitol dehydrogenase family.

The enzyme catalyses D-mannitol 1-phosphate + NAD(+) = beta-D-fructose 6-phosphate + NADH + H(+). The sequence is that of Mannitol-1-phosphate 5-dehydrogenase from Bacillus velezensis (strain DSM 23117 / BGSC 10A6 / LMG 26770 / FZB42) (Bacillus amyloliquefaciens subsp. plantarum).